The following is a 170-amino-acid chain: Copper transporter 1 (170 aa).

The tract at residues 1–29 (MDHDHMHGMPRPSSSSSSSPSSMMNNGSM) is disordered. The segment covering 9–29 (MPRPSSSSSSSPSSMMNNGSM) has biased composition (low complexity). 2 helical membrane-spanning segments follow: residues 65–85 (GMYA…EWLA) and 114–134 (IGLA…VFLV).

This sequence belongs to the copper transporter (Ctr) (TC 1.A.56) family. SLC31A subfamily. In terms of tissue distribution, expressed in the root apex, lateral root primordia, embryo, trichomes, guard cells and pollen grains.

It is found in the membrane. In terms of biological role, copper transporter involved in copper acquisition and transport in leaves. Required for copper homeostasis and normal plant growth and development. In Arabidopsis thaliana (Mouse-ear cress), this protein is Copper transporter 1 (COPT1).